Reading from the N-terminus, the 115-residue chain is Large ribosomal subunit protein bL19 (115 aa).

It belongs to the bacterial ribosomal protein bL19 family.

Functionally, this protein is located at the 30S-50S ribosomal subunit interface and may play a role in the structure and function of the aminoacyl-tRNA binding site. This chain is Large ribosomal subunit protein bL19, found in Finegoldia magna (strain ATCC 29328 / DSM 20472 / WAL 2508) (Peptostreptococcus magnus).